Consider the following 819-residue polypeptide: Pentatricopeptide repeat-containing protein At5g02860 (819 aa).

The interval 57–93 is disordered; it reads QNPNSRQPISSQTSRNRNRTRIGKSRDPNLGKPWSYH. PPR repeat units follow at residues 172–206, 207–241, 242–277, 278–312, 313–347, 348–382, 383–417, 418–452, 453–487, 488–522, 523–557, 558–592, 593–627, 628–662, 663–697, 698–732, 733–767, and 768–802; these read DNSV…GFSL, DVYS…GCKP, TLIT…GIAP, DAYT…GFSY, DKVT…GFSP, SIVT…GTKP, DVFT…GCKP, NICT…GLSP, DIVT…GFVP, ERET…GVTP, DLST…RCKP, NELT…VIEP, RAVL…GFSP, DITT…GFTP, SMAT…GIKP, DIIS…GIVP, DVIT…GCRP, and NQNT…DPHA.

It belongs to the PPR family. P subfamily.

The protein is Pentatricopeptide repeat-containing protein At5g02860 of Arabidopsis thaliana (Mouse-ear cress).